The chain runs to 1861 residues: Protein TANC1 (1861 aa).

M1 is modified (N-acetylmethionine). 5 disordered regions span residues 1-46, 63-99, 206-225, 257-311, and 439-486; these read MLKA…SSLP, SLPS…ESPR, KSPC…KDSG, QKGV…MPRP, and QIAS…ISAE. Over residues 8 to 21 the composition is skewed to basic and acidic residues; that stretch reads KSREGGKGGKKEAG. S63, S66, S67, S207, and S270 each carry phosphoserine. A compositionally biased stretch (polar residues) spans 206–219; sequence KSPCETISSPSSTL. A compositionally biased stretch (polar residues) spans 440 to 455; sequence IASNSPGSSPKTSDPT. Over residues 461–480 the composition is skewed to low complexity; sequence TPLLSPSSSTSASSTAKTPL. At S465 the chain carries Phosphoserine. 11 ANK repeats span residues 896-928, 934-963, 967-996, 1000-1029, 1040-1069, 1078-1107, 1111-1140, 1144-1173, 1177-1206, 1210-1239, and 1243-1272; these read EGLS…NVNY, NNAP…CLDG, NGMT…RVDH, KGQC…SPGP, ALQQ…EHEV, WGET…AVSR, RGVP…DVNL, QGRT…ALSS, EGLS…AIDQ, NGRT…VIEH, and SGMR…KLGN. 3 TPR repeats span residues 1289 to 1322, 1336 to 1369, and 1371 to 1403; these read LQKL…FPRE, VSLY…KPKS, and EAFY…CPTN. Low complexity predominate over residues 1421–1431; sequence QRSQQQKQQGP. Disordered stretches follow at residues 1421–1485 and 1636–1696; these read QRSQ…SVPS and VAVD…KVQG. The residue at position 1439 (S1439) is a Phosphoserine. Composition is skewed to low complexity over residues 1467–1485 and 1659–1689; these read QEES…SVPS and SLTS…SSFS. S1668, S1676, and S1677 each carry phosphoserine.

Belongs to the TANC family. In terms of assembly, interacts probably directly with DLG1, DLG4, HOMER1. Interacts with DLGAP1, INA, CAMK2A, GRIN2B and GRIA1. Interacts with TNIK. Interacts with MINK1. Post-translationally, phosphorylated; by MINK1 and TNIK upon stimulation by RAP2A.

The protein resides in the postsynaptic density. In terms of biological role, may be a scaffold component in the postsynaptic density. This Homo sapiens (Human) protein is Protein TANC1 (TANC1).